The chain runs to 200 residues: MVIRRLYQFCASHVVRNCSSLKCAQNIHGHNYEVEVFIETNRLDNANMALDFGLMQQEMQVFIESFDHAHHFWDKESLEFQRFIENHCVRYVKCSFNLSAESYALMFLYYLTKILQKSVFSNDEGELKVSSVRVHETKNGYAESFLKDLENPHFKSLVHDHCVSFSQGIQNLWHDKDFFNKIISDEKQCFFHAKPLHQIP.

Histidine 13 provides a ligand contact to Zn(2+). Catalysis depends on cysteine 23, which acts as the Proton acceptor. The Zn(2+) site is built by histidine 28 and histidine 30. Active-site charge relay system residues include histidine 68 and glutamate 136.

The protein belongs to the PTPS family. QueD subfamily. Zn(2+) serves as cofactor.

It catalyses the reaction 7,8-dihydroneopterin 3'-triphosphate + H2O = 6-carboxy-5,6,7,8-tetrahydropterin + triphosphate + acetaldehyde + 2 H(+). The protein operates within purine metabolism; 7-cyano-7-deazaguanine biosynthesis. In terms of biological role, catalyzes the conversion of 7,8-dihydroneopterin triphosphate (H2NTP) to 6-carboxy-5,6,7,8-tetrahydropterin (CPH4) and acetaldehyde. The protein is 6-carboxy-5,6,7,8-tetrahydropterin synthase (queD) of Helicobacter pylori (strain ATCC 700392 / 26695) (Campylobacter pylori).